Here is a 340-residue protein sequence, read N- to C-terminus: Beta-hexosaminidase (340 aa).

Substrate contacts are provided by residues aspartate 60, arginine 68, arginine 127, and 157–158 (KH). Histidine 170 serves as the catalytic Proton donor/acceptor. Aspartate 242 (nucleophile) is an active-site residue.

Belongs to the glycosyl hydrolase 3 family. NagZ subfamily.

It localises to the cytoplasm. The catalysed reaction is Hydrolysis of terminal non-reducing N-acetyl-D-hexosamine residues in N-acetyl-beta-D-hexosaminides.. It functions in the pathway cell wall biogenesis; peptidoglycan recycling. In terms of biological role, plays a role in peptidoglycan recycling by cleaving the terminal beta-1,4-linked N-acetylglucosamine (GlcNAc) from peptide-linked peptidoglycan fragments, giving rise to free GlcNAc, anhydro-N-acetylmuramic acid and anhydro-N-acetylmuramic acid-linked peptides. This chain is Beta-hexosaminidase, found in Glaesserella parasuis serovar 5 (strain SH0165) (Haemophilus parasuis).